Here is a 7071-residue protein sequence, read N- to C-terminus: Replicase polyprotein 1ab (7071 aa).

Positions 12-127 constitute a CoV Nsp1 globular domain; sequence THVQLSLPVL…YRNVLLRKNG (116 aa). One can recognise a BetaCoV Nsp1 C-terminal domain in the interval 148 to 179; sequence ELGTDPIEDYEQNWNTKHGSGVLRELTRELNG. In terms of domain architecture, CoV Nsp2 N-terminal spans 183–456; sequence TRYVDNNFCG…NEDLLEILSR (274 aa). Zn(2+) is bound by residues cysteine 200, cysteine 231, histidine 234, histidine 236, cysteine 323, cysteine 326, cysteine 341, cysteine 344, cysteine 370, cysteine 373, histidine 382, and cysteine 416. A C2H2 region spans residues 200–236; that stretch reads CIKDLLARAGKSMCTLSEQLDYIESKRGVYCCRDHGH. Residues 323-344 are C4; it reads CNHCDEVSWQTCDFLKATCEQC. The C2HC stretch occupies residues 370–416; that stretch reads CPACQDPEIGPEHSAADYHNHSNIETRLRKGGRTRCFGGCVFAYVGC. The 231-residue stretch at 458–688 folds into the CoV Nsp2 middle domain; it reads RVNINIVGDF…VDVVNKALEM (231 aa). One can recognise a CoV Nsp2 C-terminal domain in the interval 690–818; that stretch reads IDQVTIAGAK…TNNVFRLKGG (129 aa). The 109-residue stretch at 822-930 folds into the Ubiquitin-like 1 domain; sequence KGVTFGEDTV…MYCSFYPPDE (109 aa). Macro domains lie at 1001-1167, 1205-1333, and 1341-1468; these read VNQL…MDYL, KIKA…LPSE, and ILGT…TSSS. The 67-residue stretch at 1470-1536 folds into the DPUP domain; that stretch reads TSEDHFVETV…PLDKLKSLLS (67 aa). A Ubiquitin-like 2 domain is found at 1540–1595; it reads VKTIKVFTTVDNTNLHTQLVDMSMTYGQQLGPTYLEGADVTKIKPHVNHEGKTFFV. In terms of domain architecture, Peptidase C16 spans 1609-1873; sequence YYHTLDESFL…YTEIEPKLDG (265 aa). The For PL-PRO activity role is filled by cysteine 1649. Cysteine 1727, cysteine 1730, cysteine 1762, and cysteine 1764 together coordinate Zn(2+). The segment at 1727 to 1764 adopts a C4-type zinc-finger fold; the sequence is CKHCGQKTTTLTGVEAVMYMGTLSYDNLKMGVSIPCVC. Residues histidine 1810 and aspartate 1824 each act as for PL-PRO activity in the active site. In terms of domain architecture, Nucleic acid-binding spans 1886–1996; sequence PIDLIPTQPL…CLWSTKPVDT (111 aa). The G2M domain occupies 2021–2130; that stretch reads PTPEEVVENP…LGQAAVTTSN (110 aa). Residues 2201–2221 traverse the membrane as a helical segment; sequence LFTIAMWLLLLSICLGSLIYV. Residues 2201–2369 form an HD1 region; sequence LFTIAMWLLL…IFFASFYYIW (169 aa). The 3Ecto domain maps to 2222–2292; that stretch reads TAALGVLLSN…QVTISSYKLD (71 aa). Disulfide bonds link cysteine 2238-cysteine 2266 and cysteine 2257-cysteine 2263. Transmembrane regions (helical) follow at residues 2312–2334 and 2349–2369; these read FFYLLGLSAIMQVFFGYFASHFI and MAPVSAMVRMYIFFASFYYIW. The segment at 2370–2460 is Y1; that stretch reads KSYVHIMDGC…QFKRPINPTD (91 aa). Positions 2370–2738 constitute a CoV Nsp3 Y domain; it reads KSYVHIMDGC…ITTKISLKGG (369 aa). Residues histidine 2374, cysteine 2379, cysteine 2384, cysteine 2387, cysteine 2420, histidine 2423, cysteine 2427, and cysteine 2430 each contribute to the Zn(2+) site. The segment at 2374-2387 is ZF1; sequence HIMDGCTSSTCMMC. The segment at 2420–2430 is ZF2; the sequence is CKTHNWNCLNC. Residues 2461-2555 are Y2; sequence QSSYVVDSVA…LLDQALVSDV (95 aa). The tract at residues 2461 to 2738 is coV-Y; the sequence is QSSYVVDSVA…ITTKISLKGG (278 aa). The tract at residues 2556-2637 is Y3; sequence GDSTEVSVKM…ECLKLSHHSD (82 aa). Residues 2638–2738 form a Y4 region; the sequence is LEVTGDSCNN…ITTKISLKGG (101 aa). Transmembrane regions (helical) follow at residues 2753–2773, 3020–3040, 3059–3079, 3081–3101, 3103–3123, and 3140–3160; these read LLCVLAALVCYIVMPVHILSV, ASVVAGGIIAILVTCAAYYFM, LFLMSFTILCLAPAYSFLPGV, SVFYLYLTFYFTNDVSFLAHL, WFAMFSPIVPFWITAIYVFCI, and VVFNGVTFSTFEEAALCTFLL. The HD2 stretch occupies residues 2753 to 3160; that stretch reads LLCVLAALVC…EEAALCTFLL (408 aa). The Nsp4C domain maps to 3140 to 3238; it reads VVFNGVTFST…QTSITSAVLQ (99 aa). Residues 3239–3544 enclose the Peptidase C30 domain; sequence SGFRKMAFPS…VRQCSGVTFQ (306 aa). Active-site for 3CL-PRO activity residues include histidine 3279 and cysteine 3383. A run of 7 helical transmembrane segments spans residues 3562 to 3582, 3584 to 3604, 3610 to 3630, 3657 to 3676, 3683 to 3702, 3726 to 3746, and 3754 to 3774; these read FLTSLLILVQSTQWSLFFFVY, NAFLPFTLGIMAVAACAMLLV, FLCLFLLPSLATVAYFNMVYM, CVMYASALVLLVLMTARTVY, VWTLMNVITLVYKVYYGNAL, IMFLARAIVFVCVEYYPLLFI, and IMLVYCFLGYCCCCYFGLFCL. Residues 3562 to 3774 form an HD3 region; the sequence is FLTSLLILVQ…CCCYFGLFCL (213 aa). The region spanning 3835–3917 is the RdRp Nsp7 cofactor domain; sequence SKMSDVKCTS…EMLDNRATLQ (83 aa). Residues 3918–4115 enclose the RdRp Nsp8 cofactor domain; that stretch reads AIASEFSSLP…LRANSAVKLQ (198 aa). The 113-residue stretch at 4116-4228 folds into the Nsp9 ssRNA-binding domain; it reads NNELSPVALR…GSLAATVRLQ (113 aa). In terms of domain architecture, ExoN/MTase coactivator spans 4229 to 4367; it reads AGNATEVPAN…CDQLREPMMQ (139 aa). Residues cysteine 4302, cysteine 4305, histidine 4311, cysteine 4318, cysteine 4345, cysteine 4348, cysteine 4356, and cysteine 4358 each contribute to the Zn(2+) site. Zinc fingers lie at residues 4302–4318 and 4345–4358; these read CLYCRCHIDHPNPKGFC and CTVCGMWKGYGCSC. Residues 4374–4628 enclose the NiRAN domain; that stretch reads FLNRVCGVSA…AAESHMDADL (255 aa). Positions 4576 and 4585 each coordinate Mn(2+). A Nsp12 Interface domain is found at 4633 to 4731; it reads IKWDLLKYDF…HNQDVNLHSS (99 aa). Histidine 4662, cysteine 4668, cysteine 4673, cysteine 4677, and cysteine 4854 together coordinate Zn(2+). Residues 4732 to 5299 enclose the Nsp12 RNA-dependent RNA polymerase domain; that stretch reads RLSFKELLVY…AMYTPHTVLQ (568 aa). The segment at 4734–4948 is rdRp Fingers N-ter; that stretch reads SFKELLVYAA…HQKLLKSIAA (215 aa). The segment at 4949-4987 is rdRp Palm N-ter; it reads TRGATVVIGTSKFYGGWHNMLKTVYSDVETPHLMGWDYP. Positions 4979–5141 constitute a RdRp catalytic domain; that stretch reads PHLMGWDYPK…CYNSNYAAQG (163 aa). The interval 4988–5046 is rdRp Fingers C-ter; that stretch reads KCDRAMPNMLRIMASLVLARKHSTCCNLSHRFYRLANECAQVLSEMVMCGGSLYVKPGG. Residues histidine 5009, cysteine 5012, and cysteine 5013 each contribute to the Zn(2+) site. The tract at residues 5047 to 5182 is rdRp Palm C-ter; sequence TSSGDATTAY…TKGPHEFCSQ (136 aa). Active-site residues include serine 5126, aspartate 5127, and aspartate 5128. Positions 5183 to 5299 are rdRp Thumb; sequence HTMLVKQGDD…AMYTPHTVLQ (117 aa). The 113-residue stretch at 5300–5412 folds into the CV ZBD domain; it reads AVGACVLCNS…TDFNAIATCD (113 aa). Zn(2+) is bound by residues cysteine 5304, cysteine 5307, cysteine 5315, cysteine 5318, cysteine 5325, cysteine 5328, histidine 5332, histidine 5338, cysteine 5349, cysteine 5354, cysteine 5371, and histidine 5374. Positions 5556–5737 constitute a (+)RNA virus helicase ATP-binding domain; that stretch reads NISDEFSSNV…MKTIGPDMFL (182 aa). ATP is bound at residue 5581–5588; the sequence is GPPGTGKS. The 170-residue stretch at 5738-5907 folds into the (+)RNA virus helicase C-terminal domain; that stretch reads GTCRRCPAEI…TLQAENVTGL (170 aa). An ExoN domain is found at 5972-6187; sequence MFITREEAIR…RCLAVHECFV (216 aa). Active-site residues include aspartate 5990, glutamate 5992, and glutamate 6091. Zn(2+)-binding residues include cysteine 6107, cysteine 6110, cysteine 6126, histidine 6129, histidine 6157, cysteine 6161, and histidine 6164. Catalysis depends on residues histidine 6168 and aspartate 6173. Cysteine 6179 is a binding site for Zn(2+). One can recognise an N7-MTase domain in the interval 6196 to 6427; sequence YPIIGDELKI…NLWNTFTRLQ (232 aa). Residue 6231-6237 participates in S-adenosyl-L-methionine binding; it reads DIGNPKA. A gpppA-binding region spans residues 6314-6328; the sequence is CDGGSLYVNKHAFHT. 4 residues coordinate Zn(2+): cysteine 6352, cysteine 6373, cysteine 6384, and histidine 6387. Residues 6428-6488 enclose the Nsp15 N-terminal oligomerization domain; that stretch reads SLENVAYNVV…NVAFELWAKR (61 aa). The AV-Nsp11N/CoV-Nsp15M domain maps to 6489 to 6614; it reads NIKSVPEIKI…YFKKVDGIIQ (126 aa). The NendoU domain maps to 6631 to 6770; the sequence is KPRSQMETDF…KDGHVETFYP (140 aa). Residues histidine 6661, histidine 6676, lysine 6716, lysine 6819, aspartate 6903, lysine 6943, and glutamate 6976 contribute to the active site. The region spanning 6775-7069 is the Nidovirus-type SAM-dependent 2'-O-MTase domain; sequence SQAWQPGVAM…RVVVSSDILV (295 aa).

This sequence belongs to the coronaviruses polyprotein 1ab family. In terms of assembly, interacts with host PHB and PHB2. As to quaternary structure, interacts with papain-like protease nsp3 and non-structural protein 6. Monomer. Homodimer. Only the homodimer shows catalytic activity. In terms of assembly, interacts with nsp8 and nsp12 to form the replication-transcription complex (RTC): nsp12, nsp7, two subunits of nsp8, and up to two subunits of nsp13. As to quaternary structure, interacts with nsp7, nsp13 and nsp12 to form the replication-transcription complex (RTC): nsp12, nsp7, two subunits of nsp8, and up to two subunits of nsp13. Interacts with nsp12. In terms of assembly, interacts with proofreading exoribonuclease nsp14 and 2'-O-methyltransferase nsp16; these interactions enhance nsp14 and nsp16 enzymatic activities. As to quaternary structure, interacts with nsp7 and nsp8 to form the replication-transcription complex (RTC): nsp12, nsp7, two subunits of nsp8, and up to two subunits of nsp13. Interacts with nsp9. Interacts with nsp8 to form the replication-transcription complex (RTC): nsp12, nsp7, two subunits of nsp8, and up to two subunits of nsp13. It depends on Mn(2+) as a cofactor. The cofactor is Mg(2+). Specific enzymatic cleavages in vivo by its own proteases yield mature proteins. 3CL-PRO and PL-PRO proteinases are autocatalytically processed.

It is found in the host membrane. It localises to the host cytoplasm. The protein resides in the host perinuclear region. Its subcellular location is the host endoplasmic reticulum-Golgi intermediate compartment. It carries out the reaction RNA(n) + a ribonucleoside 5'-triphosphate = RNA(n+1) + diphosphate. The enzyme catalyses ATP + H2O = ADP + phosphate + H(+). It catalyses the reaction Thiol-dependent hydrolysis of ester, thioester, amide, peptide and isopeptide bonds formed by the C-terminal Gly of ubiquitin (a 76-residue protein attached to proteins as an intracellular targeting signal).. The catalysed reaction is a 5'-end (N(7)-methyl 5'-triphosphoguanosine)-ribonucleoside in mRNA + S-adenosyl-L-methionine = a 5'-end (N(7)-methyl 5'-triphosphoguanosine)-(2'-O-methyl-ribonucleoside) in mRNA + S-adenosyl-L-homocysteine + H(+). It carries out the reaction uridylyl-uridylyl-ribonucleotide-RNA = a 3'-end uridylyl-2',3'-cyclophospho-uridine-RNA + a 5'-end dephospho-ribonucleoside-RNA. The enzyme catalyses a 5'-end diphospho-ribonucleoside in mRNA + GTP + H(+) = a 5'-end (5'-triphosphoguanosine)-ribonucleoside in mRNA + diphosphate. It catalyses the reaction a 5'-end (5'-triphosphoguanosine)-ribonucleoside in mRNA + S-adenosyl-L-methionine = a 5'-end (N(7)-methyl 5'-triphosphoguanosine)-ribonucleoside in mRNA + S-adenosyl-L-homocysteine. The replicase polyprotein of coronaviruses is a multifunctional protein: it contains the activities necessary for the transcription of negative stranded RNA, leader RNA, subgenomic mRNAs and progeny virion RNA as well as proteinases responsible for the cleavage of the polyprotein into functional products. Functionally, inhibits host translation by interacting with the 40S ribosomal subunit. The nsp1-40S ribosome complex further induces an endonucleolytic cleavage near the 5'UTR of host mRNAs, targeting them for degradation. Viral mRNAs are not susceptible to nsp1-mediated endonucleolytic RNA cleavage thanks to the presence of a 5'-end leader sequence and are therefore protected from degradation. By suppressing host gene expression, nsp1 facilitates efficient viral gene expression in infected cells and evasion from host immune response. Its function is as follows. May play a role in the modulation of host cell survival signaling pathway by interacting with host PHB and PHB2. Indeed, these two proteins play a role in maintaining the functional integrity of the mitochondria and protecting cells from various stresses. In terms of biological role, responsible for the cleavages located at the N-terminus of the replicase polyprotein. In addition, PL-PRO possesses a deubiquitinating/deISGylating activity and processes both 'Lys-48'- and 'Lys-63'-linked polyubiquitin chains from cellular substrates. Participates together with nsp4 in the assembly of virally-induced cytoplasmic double-membrane vesicles necessary for viral replication. Antagonizes innate immune induction of type I interferon by blocking the phosphorylation, dimerization and subsequent nuclear translocation of host IRF3. Also prevents host NF-kappa-B signaling. Participates in the assembly of virally-induced cytoplasmic double-membrane vesicles necessary for viral replication. Functionally, cleaves the C-terminus of replicase polyprotein at 11 sites. Recognizes substrates containing the core sequence [ILMVF]-Q-|-[SGACN]. Also able to bind an ADP-ribose-1''-phosphate (ADRP). Its function is as follows. Plays a role in the initial induction of autophagosomes from host endoplasmic reticulum. Later, limits the expansion of these phagosomes that are no longer able to deliver viral components to lysosomes. In terms of biological role, forms a hexadecamer with nsp8 (8 subunits of each) that may participate in viral replication by acting as a primase. Alternatively, may synthesize substantially longer products than oligonucleotide primers. Forms a hexadecamer with nsp7 (8 subunits of each) that may participate in viral replication by acting as a primase. Alternatively, may synthesize substantially longer products than oligonucleotide primers. Functionally, forms a primer, NSP9-pU, which is utilized by the polymerase for the initiation of RNA chains. Interacts with ribosome signal recognition particle RNA (SRP). Together with NSP8, suppress protein integration into the cell membrane, thereby disrupting host immune defenses. Its function is as follows. Plays a pivotal role in viral transcription by stimulating both nsp14 3'-5' exoribonuclease and nsp16 2'-O-methyltransferase activities. Therefore plays an essential role in viral mRNAs cap methylation. In terms of biological role, RNA-directed RNA polymerase that catalyzes the transcription of viral genomic and subgenomic RNAs. Acts in complex with nsp7 and nsp8 to transcribe both the minus and positive strands of genomic RNA. The kinase-like NiRAN domain of NSP12 attaches one or more nucleotides to the amino terminus of NSP9, forming a covalent RNA-protein intermediate that serves as transcription/replication primer. Subgenomic RNAs (sgRNAs) are formed by discontinuous transcription: The polymerase has the ability to pause at transcription-regulating sequences (TRS) and jump to the leader TRS, resulting in a major deletion. This creates a series of subgenomic RNAs that are replicated, transcribed and translated. In addition, Nsp12 is a subunit of the viral RNA capping enzyme that catalyzes the RNA guanylyltransferase reaction for genomic and sub-genomic RNAs. Subsequently, the NiRAN domain transfers RNA to GDP, and forms the core cap structure GpppA-RNA. Multi-functional protein with a zinc-binding domain in N-terminus displaying RNA and DNA duplex-unwinding activities with 5' to 3' polarity. Activity of helicase is dependent on magnesium. Functionally, plays a role in viral RNA synthesis through two distinct activities. The N7-guanine methyltransferase activity plays a role in the formation of the cap structure GpppA-RNA. The proofreading exoribonuclease reduces the sensitivity of the virus to RNA mutagens during replication. This activity acts on both ssRNA and dsRNA in a 3'-5' direction. Its function is as follows. Plays a role in viral transcription/replication and prevents the simultaneous activation of host cell dsRNA sensors, such as MDA5/IFIH1, OAS, and PKR. Acts by degrading the 5'-polyuridines generated during replication of the poly(A) region of viral genomic and subgenomic RNAs. Catalyzes a two-step reaction in which a 2'3'-cyclic phosphate (2'3'-cP) is first generated by 2'-O transesterification, which is then hydrolyzed to a 3'-phosphate (3'-P). If not degraded, poly(U) RNA would hybridize with poly(A) RNA tails and activate host dsRNA sensors. In terms of biological role, methyltransferase that mediates mRNA cap 2'-O-ribose methylation to the 5'-cap structure of viral mRNAs. N7-methyl guanosine cap is a prerequisite for binding of nsp16. Therefore plays an essential role in viral mRNAs cap methylation which is essential to evade immune system. In Rhinolophus ferrumequinum (Greater horseshoe bat), this protein is Replicase polyprotein 1ab (rep).